The following is a 620-amino-acid chain: Chaperone protein DnaK (620 aa).

Threonine 197 is modified (phosphothreonine; by autocatalysis). The disordered stretch occupies residues alanine 597–glutamate 620.

It belongs to the heat shock protein 70 family.

In terms of biological role, acts as a chaperone. This Helicobacter pylori (strain Shi470) protein is Chaperone protein DnaK.